The chain runs to 670 residues: DNA ligase (670 aa).

NAD(+) is bound by residues 32–36 (DSEYD), 81–82 (SL), and Glu-114. Lys-116 (N6-AMP-lysine intermediate) is an active-site residue. NAD(+)-binding residues include Arg-137, Glu-174, Lys-291, and Lys-315. Zn(2+) contacts are provided by Cys-409, Cys-412, Cys-427, and Cys-433. In terms of domain architecture, BRCT spans 592-670 (ASENLFKDKT…EEEFLAQITR (79 aa)).

It belongs to the NAD-dependent DNA ligase family. LigA subfamily. The cofactor is Mg(2+). Mn(2+) is required as a cofactor.

The catalysed reaction is NAD(+) + (deoxyribonucleotide)n-3'-hydroxyl + 5'-phospho-(deoxyribonucleotide)m = (deoxyribonucleotide)n+m + AMP + beta-nicotinamide D-nucleotide.. In terms of biological role, DNA ligase that catalyzes the formation of phosphodiester linkages between 5'-phosphoryl and 3'-hydroxyl groups in double-stranded DNA using NAD as a coenzyme and as the energy source for the reaction. It is essential for DNA replication and repair of damaged DNA. This is DNA ligase from Haemophilus influenzae (strain PittGG).